The following is a 195-amino-acid chain: Translation machinery-associated protein 22 (195 aa).

The SUI1 domain occupies 94–165 (VLIKRIERNR…EAKEYIEKLL (72 aa)). Residues 176-195 (EQVDEKKKKKATAPGATPAA) are disordered.

Belongs to the DENR family. Interacts with the 40S ribosomal subunit.

The protein resides in the cytoplasm. The sequence is that of Translation machinery-associated protein 22 (TMA22) from Scheffersomyces stipitis (strain ATCC 58785 / CBS 6054 / NBRC 10063 / NRRL Y-11545) (Yeast).